A 100-amino-acid chain; its full sequence is Urease subunit gamma (100 aa).

Belongs to the urease gamma subunit family. Heterotrimer of UreA (gamma), UreB (beta) and UreC (alpha) subunits. Three heterotrimers associate to form the active enzyme.

The protein resides in the cytoplasm. It carries out the reaction urea + 2 H2O + H(+) = hydrogencarbonate + 2 NH4(+). It functions in the pathway nitrogen metabolism; urea degradation; CO(2) and NH(3) from urea (urease route): step 1/1. This chain is Urease subunit gamma, found in Burkholderia mallei (strain NCTC 10247).